A 507-amino-acid polypeptide reads, in one-letter code: Xylose import ATP-binding protein XylG (507 aa).

2 consecutive ABC transporter domains span residues 5–242 and 259–504; these read LKMT…VGRE and LEVK…LSEK. An ATP-binding site is contributed by 37–44; that stretch reads GENGSGKS.

This sequence belongs to the ABC transporter superfamily. Xylose importer (TC 3.A.1.2.4) family. As to quaternary structure, the complex is composed of two ATP-binding proteins (XylG), two transmembrane proteins (XylH) and a solute-binding protein (XylF).

Its subcellular location is the cell inner membrane. The catalysed reaction is D-xylose(out) + ATP + H2O = D-xylose(in) + ADP + phosphate + H(+). Functionally, part of the ABC transporter complex XylFGH involved in xylose import. Responsible for energy coupling to the transport system. The sequence is that of Xylose import ATP-binding protein XylG from Photobacterium profundum (strain SS9).